The primary structure comprises 210 residues: Na(+)-translocating NADH-quinone reductase subunit D (210 aa).

Helical transmembrane passes span Ile11–Ala31, Phe42–Ile62, Val70–Leu90, Val103–Met123, Phe131–Phe151, and Asn178–Ile198.

The protein belongs to the NqrDE/RnfAE family. In terms of assembly, composed of six subunits; NqrA, NqrB, NqrC, NqrD, NqrE and NqrF.

The protein localises to the cell inner membrane. The enzyme catalyses a ubiquinone + n Na(+)(in) + NADH + H(+) = a ubiquinol + n Na(+)(out) + NAD(+). Functionally, NQR complex catalyzes the reduction of ubiquinone-1 to ubiquinol by two successive reactions, coupled with the transport of Na(+) ions from the cytoplasm to the periplasm. NqrA to NqrE are probably involved in the second step, the conversion of ubisemiquinone to ubiquinol. The protein is Na(+)-translocating NADH-quinone reductase subunit D of Vibrio anguillarum (Listonella anguillarum).